Reading from the N-terminus, the 381-residue chain is O-antigen chain mannosyltransferase B (381 aa).

It belongs to the glycosyltransferase group 1 family. Glycosyltransferase 4 subfamily.

It catalyses the reaction alpha-D-mannosyl-(1-&gt;3)-N-acetyl-alpha-D-glucosaminyl-di-trans,octa-cis-undecaprenyl diphosphate + 2 GDP-alpha-D-mannose = alpha-D-mannosyl-(1-&gt;3)-alpha-D-mannosyl-(1-&gt;3)-alpha-D-mannosyl-(1-&gt;3)-N-acetyl-alpha-D-glucosaminyl-di-trans,octa-cis-undecaprenyl diphosphate + 2 GDP + 2 H(+). It functions in the pathway bacterial outer membrane biogenesis; LPS O-antigen biosynthesis. In terms of biological role, mannosyltransferase involved in the biosynthesis of the repeat unit of the lipopolysaccharide (LPS) O-antigen region. Catalyzes the transfer of two alpha-(1-&gt;3)-linked mannose residues to the product of the WbdC enzyme during the synthesis of the adapter region. The protein is O-antigen chain mannosyltransferase B of Escherichia coli.